Reading from the N-terminus, the 74-residue chain is Large ribosomal subunit protein bL31 (74 aa).

Zn(2+) is bound by residues cysteine 16, cysteine 18, cysteine 37, and cysteine 40.

Belongs to the bacterial ribosomal protein bL31 family. Type A subfamily. In terms of assembly, part of the 50S ribosomal subunit. Zn(2+) is required as a cofactor.

Binds the 23S rRNA. The chain is Large ribosomal subunit protein bL31 from Nitrosomonas europaea (strain ATCC 19718 / CIP 103999 / KCTC 2705 / NBRC 14298).